The following is a 60-amino-acid chain: UPF0337 protein SAV1625 (60 aa).

The segment at 18–41 (VGNVTDNKELEKEGQQDKATGKAK) is disordered. Positions 23–41 (DNKELEKEGQQDKATGKAK) are enriched in basic and acidic residues.

This sequence belongs to the UPF0337 (CsbD) family.

The sequence is that of UPF0337 protein SAV1625 from Staphylococcus aureus (strain Mu50 / ATCC 700699).